The chain runs to 127 residues: Mitochondrial pyruvate carrier 2 (127 aa).

The Mitochondrial matrix portion of the chain corresponds to 2–40 (SAAGARGLRATYHRLLDKVELMLPEKLRPLYNHPAGPRT). Residues 41–61 (VFFWAPIMKWGLVCAGLADMA) form a helical membrane-spanning segment. At 62-72 (RPAEKLSTAQS) the chain is on the mitochondrial intermembrane side. Residues 73–90 (AVLMATGFIWSRYSLVII) form a helical membrane-spanning segment. The Mitochondrial matrix portion of the chain corresponds to 91–95 (PKNWS). A helical transmembrane segment spans residues 96-115 (LFAVNFFVGAAGASQLFRIW). Residues 116–127 (RYNQELKAKAHK) are Mitochondrial intermembrane-facing.

It belongs to the mitochondrial pyruvate carrier (MPC) (TC 2.A.105) family. As to quaternary structure, homodimer. Homooligomer. Forms heterodimers with MPC1 and MPC1L. The heterodimer is the more stable and dominant form.

It is found in the mitochondrion inner membrane. It catalyses the reaction pyruvate(out) + H(+)(out) = pyruvate(in) + H(+)(in). Functionally, mediates the uptake of pyruvate into mitochondria. This chain is Mitochondrial pyruvate carrier 2 (MPC2), found in Homo sapiens (Human).